The following is a 171-amino-acid chain: Transcription antitermination protein NusB (171 aa).

The protein belongs to the NusB family.

Functionally, involved in transcription antitermination. Required for transcription of ribosomal RNA (rRNA) genes. Binds specifically to the boxA antiterminator sequence of the ribosomal RNA (rrn) operons. This is Transcription antitermination protein NusB from Pelodictyon phaeoclathratiforme (strain DSM 5477 / BU-1).